Here is a 274-residue protein sequence, read N- to C-terminus: Dermonecrotic toxin SdSicTox-betaIIB1bix (274 aa).

The active site involves histidine 5. Mg(2+) is bound by residues glutamate 25 and aspartate 27. Catalysis depends on histidine 41, which acts as the Nucleophile. 2 cysteine pairs are disulfide-bonded: cysteine 45-cysteine 51 and cysteine 47-cysteine 190. Aspartate 85 is a binding site for Mg(2+).

It belongs to the arthropod phospholipase D family. Class II subfamily. Mg(2+) is required as a cofactor. In terms of tissue distribution, expressed by the venom gland.

It localises to the secreted. The catalysed reaction is an N-(acyl)-sphingosylphosphocholine = an N-(acyl)-sphingosyl-1,3-cyclic phosphate + choline. It catalyses the reaction an N-(acyl)-sphingosylphosphoethanolamine = an N-(acyl)-sphingosyl-1,3-cyclic phosphate + ethanolamine. The enzyme catalyses a 1-acyl-sn-glycero-3-phosphocholine = a 1-acyl-sn-glycero-2,3-cyclic phosphate + choline. It carries out the reaction a 1-acyl-sn-glycero-3-phosphoethanolamine = a 1-acyl-sn-glycero-2,3-cyclic phosphate + ethanolamine. In terms of biological role, dermonecrotic toxins cleave the phosphodiester linkage between the phosphate and headgroup of certain phospholipids (sphingolipid and lysolipid substrates), forming an alcohol (often choline) and a cyclic phosphate. This toxin acts on sphingomyelin (SM). It may also act on ceramide phosphoethanolamine (CPE), lysophosphatidylcholine (LPC) and lysophosphatidylethanolamine (LPE), but not on lysophosphatidylserine (LPS), and lysophosphatidylglycerol (LPG). It acts by transphosphatidylation, releasing exclusively cyclic phosphate products as second products. Induces dermonecrosis, hemolysis, increased vascular permeability, edema, inflammatory response, and platelet aggregation. The chain is Dermonecrotic toxin SdSicTox-betaIIB1bix from Sicarius cf. damarensis (strain GJB-2008) (Six-eyed sand spider).